The following is a 511-amino-acid chain: Histidine ammonia-lyase (511 aa).

The segment at residues 143–145 is a cross-link (5-imidazolinone (Ala-Gly)); that stretch reads ASG. Ser144 is modified (2,3-didehydroalanine (Ser)).

The protein belongs to the PAL/histidase family. In terms of processing, contains an active site 4-methylidene-imidazol-5-one (MIO), which is formed autocatalytically by cyclization and dehydration of residues Ala-Ser-Gly.

It is found in the cytoplasm. The enzyme catalyses L-histidine = trans-urocanate + NH4(+). It participates in amino-acid degradation; L-histidine degradation into L-glutamate; N-formimidoyl-L-glutamate from L-histidine: step 1/3. The polypeptide is Histidine ammonia-lyase (Vibrio cholerae serotype O1 (strain ATCC 39315 / El Tor Inaba N16961)).